The sequence spans 232 residues: N-acetyltransferase 8B (232 aa).

Residues 1 to 62 lie on the Cytoplasmic side of the membrane; the sequence is MPRFEAQKSS…FLLLLGVPLA (62 aa). Residues 63 to 83 traverse the membrane as a helical; Signal-anchor for type II membrane protein segment; sequence LVLVSGSWILAVICIFFLLLL. Positions 79-224 constitute an N-acetyltransferase domain; that stretch reads FLLLLLRLLA…WRLVDICFIQ (146 aa). Topologically, residues 84–232 are lumenal; it reads LRLLARQPWK…IQLNYSFPSA (149 aa). Lys-109 carries the N6-acetyllysine modification.

This sequence belongs to the NAT8 family. In terms of processing, acetylation on Lys-109 modulates enzymatic activity. As to expression, expressed in brain (at protein level).

It localises to the endoplasmic reticulum-Golgi intermediate compartment membrane. The protein resides in the endoplasmic reticulum membrane. The enzyme catalyses L-lysyl-[protein] + acetyl-CoA = N(6)-acetyl-L-lysyl-[protein] + CoA + H(+). In terms of biological role, endoplasmic reticulum (ER)-membrane-bound lysine N-acetyltransferase catalyzing the N6-acetylation of lysine residues in the lumen of the ER in various proteins, including PROM1 and BACE1, using acetyl-CoA as acetyl donor. Thereby, may regulate apoptosis through the acetylation and the regulation of the expression of PROM1. Acetylates and stabilizes BACE1 immature protein, leading to increased steady-state levels in neurons. By acting on BACE1 expression, may regulate amyloid beta-peptide formation. N(6)-lysine acetylation in ER maintains protein homeostasis and regulates reticulophagy. This is N-acetyltransferase 8B from Mus musculus (Mouse).